Here is a 341-residue protein sequence, read N- to C-terminus: MIRDEIPISAQVLQWRCVESRVDSARLHYSRFAISPFRSGQASTVGIAMRRALLGEVEGTCITCAEFKRVTHEYSTILGIQESVHDVLINLGEIVLRSDSYETQKAFISILGPKKVTAQDIILPPSVKIIDTTQYIATVTKAIHLDIELKIEKDFGYRIEDPIKSADGNFPVDAVFMPIRNVNYSVHSFENGNETQEILFLEIWTNGSVTPKEALYEASRSLINLFIPFLHAEKKEFIYGLKNTYESNMSYFSSPSLSADIDEMTKGVTFKHIFIDQLELPARAYNCLKRVNAHTISDLLNYSQDDLMKIKNFGKKSVEQVLEALQKRFSINLPKNKLHFH.

The alpha N-terminal domain (alpha-NTD) stretch occupies residues Met-1–Glu-233. The segment at Thr-265–His-341 is alpha C-terminal domain (alpha-CTD).

This sequence belongs to the RNA polymerase alpha chain family. In terms of assembly, in plastids the minimal PEP RNA polymerase catalytic core is composed of four subunits: alpha, beta, beta', and beta''. When a (nuclear-encoded) sigma factor is associated with the core the holoenzyme is formed, which can initiate transcription.

The protein resides in the plastid. Its subcellular location is the chloroplast. The enzyme catalyses RNA(n) + a ribonucleoside 5'-triphosphate = RNA(n+1) + diphosphate. In terms of biological role, DNA-dependent RNA polymerase catalyzes the transcription of DNA into RNA using the four ribonucleoside triphosphates as substrates. This is DNA-directed RNA polymerase subunit alpha from Takakia lepidozioides (Moss).